Here is a 455-residue protein sequence, read N- to C-terminus: Bifunctional protein GlmU (455 aa).

The tract at residues 1-228 (MYKCALVLAA…YEETIGVNSR (228 aa)) is pyrophosphorylase. UDP-N-acetyl-alpha-D-glucosamine is bound by residues 8–11 (LAAG), lysine 22, glutamine 73, and 78–79 (GT). Residue aspartate 103 coordinates Mg(2+). Residues glycine 140, glutamate 154, asparagine 169, and asparagine 226 each contribute to the UDP-N-acetyl-alpha-D-glucosamine site. Position 226 (asparagine 226) interacts with Mg(2+). The segment at 229 to 249 (VQLAEAEEILKNRINLMHMEN) is linker. The segment at 250–455 (GVTLIDPRTT…GWVDKKGLKK (206 aa)) is N-acetyltransferase. Positions 331 and 349 each coordinate UDP-N-acetyl-alpha-D-glucosamine. The active-site Proton acceptor is histidine 361. The UDP-N-acetyl-alpha-D-glucosamine site is built by tyrosine 364 and asparagine 375. Acetyl-CoA contacts are provided by residues 384 to 385 (NY), alanine 421, and arginine 438.

The protein in the N-terminal section; belongs to the N-acetylglucosamine-1-phosphate uridyltransferase family. It in the C-terminal section; belongs to the transferase hexapeptide repeat family. Homotrimer. The cofactor is Mg(2+).

The protein resides in the cytoplasm. The enzyme catalyses alpha-D-glucosamine 1-phosphate + acetyl-CoA = N-acetyl-alpha-D-glucosamine 1-phosphate + CoA + H(+). It carries out the reaction N-acetyl-alpha-D-glucosamine 1-phosphate + UTP + H(+) = UDP-N-acetyl-alpha-D-glucosamine + diphosphate. It participates in nucleotide-sugar biosynthesis; UDP-N-acetyl-alpha-D-glucosamine biosynthesis; N-acetyl-alpha-D-glucosamine 1-phosphate from alpha-D-glucosamine 6-phosphate (route II): step 2/2. It functions in the pathway nucleotide-sugar biosynthesis; UDP-N-acetyl-alpha-D-glucosamine biosynthesis; UDP-N-acetyl-alpha-D-glucosamine from N-acetyl-alpha-D-glucosamine 1-phosphate: step 1/1. The protein operates within bacterial outer membrane biogenesis; LPS lipid A biosynthesis. In terms of biological role, catalyzes the last two sequential reactions in the de novo biosynthetic pathway for UDP-N-acetylglucosamine (UDP-GlcNAc). The C-terminal domain catalyzes the transfer of acetyl group from acetyl coenzyme A to glucosamine-1-phosphate (GlcN-1-P) to produce N-acetylglucosamine-1-phosphate (GlcNAc-1-P), which is converted into UDP-GlcNAc by the transfer of uridine 5-monophosphate (from uridine 5-triphosphate), a reaction catalyzed by the N-terminal domain. The sequence is that of Bifunctional protein GlmU from Clostridium beijerinckii (strain ATCC 51743 / NCIMB 8052) (Clostridium acetobutylicum).